Reading from the N-terminus, the 624-residue chain is Anti-CBASS protein Acb1 (624 aa).

Y106 contacts 3',3'-cGAMP. Y106 contributes to the 3',3'-cUAMP binding site. Catalysis depends on residues H503, T505, H581, and T583. W617 provides a ligand contact to 3',3'-cGAMP. Position 617 (W617) interacts with 3',3'-cUAMP.

This sequence belongs to the anti-CBASS protein Acb1 family.

It carries out the reaction 3',3'-cUAMP + H2O = U[3'-5']pAp[3'] + H(+). It catalyses the reaction 3',3',3'-c-tri-AMP + H2O = A[3'-5']pA[3'-5']pAp[3'] + H(+). The enzyme catalyses 3',3',3'-cAAG + H2O = G[3'-5']pA[3'-5']pAp[3'] + H(+). The catalysed reaction is 3',3',3'-cAAG + H2O = A[3'-5']pG[3'-5']pAp[3'] + H(+). It carries out the reaction 3',3'-cGAMP + H2O = G[3'-5']pAp[3'] + H(+). In terms of biological role, counteracts or regulates the endogenous CBASS antiviral defense system. Phosphodiesterase that enables metal-independent hydrolysis of the host cyclic di- and trinucleotide CBASS signals such as 3'3'-cGAMP, 3'3'cUA, and 3'3'3'-cAAA. The protein is Anti-CBASS protein Acb1 of Sphingomonas paeninsulae.